The chain runs to 234 residues: MHFSPALKPGKLLKRYKRFLADVQLEDGTEITLHCPNTGSMRNCLFPGETVWFSTSNNPKRKYAHTWELMATPTGGLIGIHSGNANALVEEALNKGIITELTGYDSLSREVKYGDENSRIDILLESAQKPACYIEVKSCTLLEDGQGYFPDAVSLRGQKHLRELMHMASLGHRAVLLFVVQHTDIHSVAPAAHIDPEYANLLKKAILSGVEVLAYRCEISPDEIHLAQSCPVRV.

The protein belongs to the SfsA family.

This is Sugar fermentation stimulation protein homolog from Shewanella sp. (strain MR-4).